The chain runs to 31 residues: Kappa-theraphotoxin-Ps1b (31 aa).

Intrachain disulfides connect Cys-2–Cys-16, Cys-9–Cys-21, and Cys-15–Cys-25. At Met-31 the chain carries Methionine amide.

This sequence belongs to the neurotoxin 30 (phrixotoxin) family. Expressed by the venom gland.

It localises to the secreted. Functionally, potent and specific blocker of Kv4.2/KCND2 (IC(50)=34 nM) and Kv4.3/KCND3 (IC(50)=71 nM) potassium channels. Acts by altering the gating properties of these channels. This Paraphysa scrofa (Chilean copper tarantula) protein is Kappa-theraphotoxin-Ps1b.